Consider the following 462-residue polypeptide: Cytochrome c biogenesis protein CcsB (462 aa).

Helical transmembrane passes span 30 to 50, 89 to 109, and 175 to 195; these read LRVA…GTVI, TWWY…CTFR, and IGPI…IWGA.

It belongs to the Ccs1/CcsB family. As to quaternary structure, may interact with CcsA.

The protein localises to the cellular thylakoid membrane. Required during biogenesis of c-type cytochromes (cytochrome c6 and cytochrome f) at the step of heme attachment. This chain is Cytochrome c biogenesis protein CcsB, found in Picosynechococcus sp. (strain ATCC 27264 / PCC 7002 / PR-6) (Agmenellum quadruplicatum).